Reading from the N-terminus, the 740-residue chain is Ion-translocating oxidoreductase complex subunit C (740 aa).

2 consecutive 4Fe-4S ferredoxin-type domains span residues 369–397 (GEPQ…QQLY) and 407–436 (KATT…VQYF). 8 residues coordinate [4Fe-4S] cluster: cysteine 377, cysteine 380, cysteine 383, cysteine 387, cysteine 416, cysteine 419, cysteine 422, and cysteine 426. The interval 602–684 (KLEQQQANAE…EPEEQVDPRK (83 aa)) is disordered. 2 stretches are compositionally biased toward low complexity: residues 605-615 (QQQANAEPEQQ) and 637-647 (QQQANAEPEQQ).

It belongs to the 4Fe4S bacterial-type ferredoxin family. RnfC subfamily. As to quaternary structure, the complex is composed of six subunits: RsxA, RsxB, RsxC, RsxD, RsxE and RsxG. It depends on [4Fe-4S] cluster as a cofactor.

Its subcellular location is the cell inner membrane. Part of a membrane-bound complex that couples electron transfer with translocation of ions across the membrane. Required to maintain the reduced state of SoxR. This is Ion-translocating oxidoreductase complex subunit C from Escherichia coli O7:K1 (strain IAI39 / ExPEC).